The following is a 185-amino-acid chain: Ribonuclease HII (185 aa).

One can recognise an RNase H type-2 domain in the interval 1–185; sequence MKICGIDEAG…LKHLQGILEF (185 aa). A divalent metal cation is bound by residues D7, E8, and D96.

The protein belongs to the RNase HII family. Mn(2+) is required as a cofactor. The cofactor is Mg(2+).

It is found in the cytoplasm. The enzyme catalyses Endonucleolytic cleavage to 5'-phosphomonoester.. In terms of biological role, endonuclease that specifically degrades the RNA of RNA-DNA hybrids. This is Ribonuclease HII from Campylobacter hominis (strain ATCC BAA-381 / DSM 21671 / CCUG 45161 / LMG 19568 / NCTC 13146 / CH001A).